The primary structure comprises 79 residues: Major outer membrane lipoprotein Lpp 2 (79 aa).

An N-terminal signal peptide occupies residues 1–21; the sequence is MNRTNKLILGAVVLGSALLAG. Cys-22 carries the N-palmitoyl cysteine lipid modification. A lipid anchor (S-diacylglycerol cysteine) is attached at Cys-22. 2 consecutive repeats follow at residues 25–35 and 39–49; these read NAKIDQLSSDV and SAKVDQLSNDV. A coiled-coil region spans residues 28–76; that stretch reads IDQLSSDVQTLSAKVDQLSNDVNAMRSDIQAAKDDAARANQRLDNKVSR. The disordered stretch occupies residues 60-79; it reads KDDAARANQRLDNKVSRVRK. Lys-79 bears the N6-murein peptidoglycan lysine mark.

This sequence belongs to the Lpp family. Homotrimer.

It is found in the cell outer membrane. Its subcellular location is the secreted. It localises to the cell wall. Functionally, a highly abundant outer membrane lipoprotein that controls the distance between the inner and outer membranes. The only protein known to be covalently linked to the peptidoglycan network (PGN). Also non-covalently binds the PGN. The link between the cell outer membrane and PGN contributes to maintenance of the structural and functional integrity of the cell envelope, and maintains the correct distance between the PGN and the outer membrane. In Salmonella paratyphi A (strain ATCC 9150 / SARB42), this protein is Major outer membrane lipoprotein Lpp 2.